Reading from the N-terminus, the 179-residue chain is Stathmin-2 (179 aa).

Residues 1-26 (MAKTAMAYKEKMKELSMLSLICSCFY) are membrane attachment. 6 positions are modified to phosphoserine: S16, S50, S62, S73, S80, and S97. In terms of domain architecture, SLD spans 38–179 (DDMEVKQINK…NKELQVELSG (142 aa)). The regulatory/phosphorylation domain stretch occupies residues 39 to 96 (DMEVKQINKRASGQAFELILKPPSPVSEAPRTLASPKKKELSLEEIQKKLEAAEERRK). Residues 74–179 (PKKKELSLEE…NKELQVELSG (106 aa)) adopt a coiled-coil conformation.

The protein belongs to the stathmin family. Expression is neuron-specific and found in cerebellum, forebrain, midbrain, tectum and spinal cord.

It is found in the cytoplasm. The protein resides in the perinuclear region. The protein localises to the cell projection. Its subcellular location is the growth cone. It localises to the membrane. It is found in the axon. The protein resides in the lamellipodium. Its function is as follows. Is a key regulator of neurite extension through regulation of microtubule instabilily. The protein is Stathmin-2 (STMN2) of Gallus gallus (Chicken).